The sequence spans 356 residues: tRNA (guanine(26)-N(2))-dimethyltransferase (356 aa).

Residues 5–352 (VLRREGTVEF…VSAGEVERVL (348 aa)) form the Trm1 methyltransferase domain. S-adenosyl-L-methionine-binding residues include arginine 40, arginine 67, aspartate 85, aspartate 111, and alanine 112.

The protein belongs to the class I-like SAM-binding methyltransferase superfamily. Trm1 family.

It carries out the reaction guanosine(26) in tRNA + 2 S-adenosyl-L-methionine = N(2)-dimethylguanosine(26) in tRNA + 2 S-adenosyl-L-homocysteine + 2 H(+). Its function is as follows. Dimethylates a single guanine residue at position 26 of a number of tRNAs using S-adenosyl-L-methionine as donor of the methyl groups. This Pyrobaculum arsenaticum (strain DSM 13514 / JCM 11321 / PZ6) protein is tRNA (guanine(26)-N(2))-dimethyltransferase.